A 280-amino-acid polypeptide reads, in one-letter code: Large ribosomal subunit protein uL2 (280 aa).

Disordered regions lie at residues 1-58 (MAIR…GGGH) and 226-280 (MNPV…KHGR). Composition is skewed to basic residues over residues 37-58 (LHGH…GGGH) and 268-280 (IVRR…KHGR).

The protein belongs to the universal ribosomal protein uL2 family. Part of the 50S ribosomal subunit. Forms a bridge to the 30S subunit in the 70S ribosome.

Functionally, one of the primary rRNA binding proteins. Required for association of the 30S and 50S subunits to form the 70S ribosome, for tRNA binding and peptide bond formation. It has been suggested to have peptidyltransferase activity; this is somewhat controversial. Makes several contacts with the 16S rRNA in the 70S ribosome. This is Large ribosomal subunit protein uL2 from Mycobacterium avium (strain 104).